Here is a 145-residue protein sequence, read N- to C-terminus: Large ribosomal subunit protein uL11 (145 aa).

The protein belongs to the universal ribosomal protein uL11 family. Part of the ribosomal stalk of the 50S ribosomal subunit. Interacts with L10 and the large rRNA to form the base of the stalk. L10 forms an elongated spine to which L12 dimers bind in a sequential fashion forming a multimeric L10(L12)X complex. In terms of processing, one or more lysine residues are methylated.

Forms part of the ribosomal stalk which helps the ribosome interact with GTP-bound translation factors. This Rickettsia massiliae (strain Mtu5) protein is Large ribosomal subunit protein uL11.